An 861-amino-acid polypeptide reads, in one-letter code: Leucine--tRNA ligase (861 aa).

The 'HIGH' region motif lies at 42-52; that stretch reads PYPSGKLHMGH. The short motif at 619-623 is the 'KMSKS' region element; the sequence is KMSKS. ATP is bound at residue Lys-622.

This sequence belongs to the class-I aminoacyl-tRNA synthetase family.

The protein localises to the cytoplasm. The enzyme catalyses tRNA(Leu) + L-leucine + ATP = L-leucyl-tRNA(Leu) + AMP + diphosphate. The sequence is that of Leucine--tRNA ligase from Actinobacillus pleuropneumoniae serotype 5b (strain L20).